The following is a 621-amino-acid chain: Putative acyltransferase plsB1 (621 aa).

Residues 123–128 (HRSYLD) carry the HXXXXD motif motif.

The protein belongs to the GPAT/DAPAT family.

Its subcellular location is the cell membrane. The sequence is that of Putative acyltransferase plsB1 (plsB1) from Mycobacterium bovis (strain ATCC BAA-935 / AF2122/97).